A 127-amino-acid chain; its full sequence is Modulator protein MzrA (127 aa).

Topologically, residues 1-11 (MRKPRVTLRHL) are cytoplasmic. Residues 12 to 31 (AWSTMLLMVLGTGMLFWSAV) form a helical membrane-spanning segment. Residues 32-127 (RQQESTLAIR…RLRDAPHRMG (96 aa)) are Periplasmic-facing.

This sequence belongs to the MzrA family. Interacts with EnvZ.

The protein localises to the cell inner membrane. Modulates the activity of the EnvZ/OmpR two-component regulatory system, probably by directly modulating EnvZ enzymatic activity and increasing stability of phosphorylated OmpR. The protein is Modulator protein MzrA of Citrobacter rodentium (strain ICC168) (Citrobacter freundii biotype 4280).